Reading from the N-terminus, the 154-residue chain is Myoglobin (154 aa).

A Globin domain is found at 2-148 (GLSDGEWHLV…FRNDIAAKIK (147 aa)). Phosphoserine is present on Ser-4. His-65 lines the nitrite pocket. Residue His-65 participates in O2 binding. Thr-68 carries the phosphothreonine modification. His-94 lines the heme b pocket.

This sequence belongs to the globin family. In terms of assembly, monomeric.

Its subcellular location is the cytoplasm. It localises to the sarcoplasm. It carries out the reaction Fe(III)-heme b-[protein] + nitric oxide + H2O = Fe(II)-heme b-[protein] + nitrite + 2 H(+). It catalyses the reaction H2O2 + AH2 = A + 2 H2O. Monomeric heme protein which primary function is to store oxygen and facilitate its diffusion within muscle tissues. Reversibly binds oxygen through a pentacoordinated heme iron and enables its timely and efficient release as needed during periods of heightened demand. Depending on the oxidative conditions of tissues and cells, and in addition to its ability to bind oxygen, it also has a nitrite reductase activity whereby it regulates the production of bioactive nitric oxide. Under stress conditions, like hypoxia and anoxia, it also protects cells against reactive oxygen species thanks to its pseudoperoxidase activity. The protein is Myoglobin (MB) of Pusa sibirica (Baikal seal).